Here is a 959-residue protein sequence, read N- to C-terminus: Glutamate receptor 3.4 (959 aa).

The signal sequence occupies residues Met1–Cys35. Over Arg36 to Thr613 the chain is Extracellular. Residues Asn38, Asn42, Asn108, Asn365, Asn378, Asn404, Asn443, Asn461, and Asn576 are each glycosylated (N-linked (GlcNAc...) asparagine). The chain crosses the membrane as a helical span at residues Ile614–Leu634. Residues Glu635–Arg643 are Cytoplasmic-facing. A helical membrane pass occupies residues Gly644 to Ser664. The Cytoplasmic segment spans residues His665–Arg675. The helical transmembrane segment at Phe676–Leu696 threads the bilayer. Over Thr697–Ser857 the chain is Extracellular. A helical membrane pass occupies residues Phe858–Trp878. Residues Arg879–Thr959 are Cytoplasmic-facing. Disordered stretches follow at residues Asp893–Pro913 and Lys936–Thr959. The segment covering Ser943–Thr959 has biased composition (low complexity).

Belongs to the glutamate-gated ion channel (TC 1.A.10.1) family. In terms of assembly, forms a heteromeric channel with GLR3.2. In terms of tissue distribution, highly expressed in roots and at lower levels in leaves and siliques. Expressed in seedlings, cotyledons, roots (e.g. root hairs, epidermis and cortex cells), stems, leaves (e.g. vascular bundles and hydathodes), and siliques. Expressed in root phloem.

It is found in the cell membrane. Its subcellular location is the plastid. It localises to the chloroplast membrane. In terms of biological role, glutamate-gated receptor that probably acts as a non-selective cation channel, at least in hypocotyls. Can be triggered by Asn, Ser, Gly and, to a lower extent, Ala, Cys and Glu. May be involved in light-signal transduction and calcium homeostasis via the regulation of calcium influx into cells. Plays an important role in the calcium-based fast transmission of environmental stress. Acts as a negative regulator of lateral root initiation and development. May restrict primordia numbers and position along the root axis by a signaling process originating in the phloem. AtGLR3.4-mediated cytosolic calcium influx may be involved in the regulation of seed germination under salt stress by modulating sodium accumulation through the SOS pathway. This Arabidopsis thaliana (Mouse-ear cress) protein is Glutamate receptor 3.4.